Consider the following 549-residue polypeptide: CTP synthase (549 aa).

The segment at 1-267 (MAKFVFITGG…CREVLDVLNL (267 aa)) is amidoligase domain. S13 contributes to the CTP binding site. UTP is bound at residue S13. Residues 14 to 19 (SIGKGI) and D71 each bind ATP. Mg(2+)-binding residues include D71 and E141. Residues 148–150 (DIE), 188–193 (KTKPTQ), and K224 each bind CTP. UTP is bound by residues 188–193 (KTKPTQ) and K224. Residues 292 to 534 (KIALVGKYVQ…IEAAQQRLPD (243 aa)) enclose the Glutamine amidotransferase type-1 domain. L-glutamine is bound at residue G354. The active-site Nucleophile; for glutamine hydrolysis is the C381. L-glutamine-binding positions include 382-385 (LGMQ), E405, and R462. Active-site residues include H507 and E509.

The protein belongs to the CTP synthase family. As to quaternary structure, homotetramer.

It catalyses the reaction UTP + L-glutamine + ATP + H2O = CTP + L-glutamate + ADP + phosphate + 2 H(+). It carries out the reaction L-glutamine + H2O = L-glutamate + NH4(+). The catalysed reaction is UTP + NH4(+) + ATP = CTP + ADP + phosphate + 2 H(+). The protein operates within pyrimidine metabolism; CTP biosynthesis via de novo pathway; CTP from UDP: step 2/2. Its activity is regulated as follows. Allosterically activated by GTP, when glutamine is the substrate; GTP has no effect on the reaction when ammonia is the substrate. The allosteric effector GTP functions by stabilizing the protein conformation that binds the tetrahedral intermediate(s) formed during glutamine hydrolysis. Inhibited by the product CTP, via allosteric rather than competitive inhibition. Catalyzes the ATP-dependent amination of UTP to CTP with either L-glutamine or ammonia as the source of nitrogen. Regulates intracellular CTP levels through interactions with the four ribonucleotide triphosphates. In Synechococcus sp. (strain CC9605), this protein is CTP synthase.